The following is a 206-amino-acid chain: Cytidylate kinase (206 aa).

7–15 (GPAASGKGT) serves as a coordination point for ATP.

Belongs to the cytidylate kinase family. Type 1 subfamily.

It is found in the cytoplasm. It carries out the reaction CMP + ATP = CDP + ADP. The enzyme catalyses dCMP + ATP = dCDP + ADP. The chain is Cytidylate kinase from Azorhizobium caulinodans (strain ATCC 43989 / DSM 5975 / JCM 20966 / LMG 6465 / NBRC 14845 / NCIMB 13405 / ORS 571).